Consider the following 247-residue polypeptide: UPF0280 protein MmarC5_0355 (247 aa).

It belongs to the UPF0280 family.

The chain is UPF0280 protein MmarC5_0355 from Methanococcus maripaludis (strain C5 / ATCC BAA-1333).